The primary structure comprises 141 residues: Hydroperoxide reductase (141 aa).

It belongs to the OsmC/Ohr family. In terms of assembly, homodimer.

The protein resides in the cytoplasm. Its function is as follows. Reduces organic and inorganic peroxide substrates. Protects the cell against oxidative stress. The protein is Hydroperoxide reductase of Mycoplasma pneumoniae (strain ATCC 29342 / M129 / Subtype 1) (Mycoplasmoides pneumoniae).